The sequence spans 170 residues: Crossover junction endodeoxyribonuclease RuvC (170 aa).

Catalysis depends on residues aspartate 11, glutamate 71, and aspartate 143. 3 residues coordinate Mg(2+): aspartate 11, glutamate 71, and aspartate 143.

Belongs to the RuvC family. As to quaternary structure, homodimer which binds Holliday junction (HJ) DNA. The HJ becomes 2-fold symmetrical on binding to RuvC with unstacked arms; it has a different conformation from HJ DNA in complex with RuvA. In the full resolvosome a probable DNA-RuvA(4)-RuvB(12)-RuvC(2) complex forms which resolves the HJ. Mg(2+) serves as cofactor.

The protein resides in the cytoplasm. It catalyses the reaction Endonucleolytic cleavage at a junction such as a reciprocal single-stranded crossover between two homologous DNA duplexes (Holliday junction).. In terms of biological role, the RuvA-RuvB-RuvC complex processes Holliday junction (HJ) DNA during genetic recombination and DNA repair. Endonuclease that resolves HJ intermediates. Cleaves cruciform DNA by making single-stranded nicks across the HJ at symmetrical positions within the homologous arms, yielding a 5'-phosphate and a 3'-hydroxyl group; requires a central core of homology in the junction. The consensus cleavage sequence is 5'-(A/T)TT(C/G)-3'. Cleavage occurs on the 3'-side of the TT dinucleotide at the point of strand exchange. HJ branch migration catalyzed by RuvA-RuvB allows RuvC to scan DNA until it finds its consensus sequence, where it cleaves and resolves the cruciform DNA. This Rhizobium meliloti (strain 1021) (Ensifer meliloti) protein is Crossover junction endodeoxyribonuclease RuvC.